Consider the following 153-residue polypeptide: Ribosome maturation factor RimP (153 aa).

This sequence belongs to the RimP family.

The protein resides in the cytoplasm. In terms of biological role, required for maturation of 30S ribosomal subunits. The polypeptide is Ribosome maturation factor RimP (Vesicomyosocius okutanii subsp. Calyptogena okutanii (strain HA)).